We begin with the raw amino-acid sequence, 330 residues long: 2-oxoisovalerate dehydrogenase subunit alpha (330 aa).

Substrate-binding positions include Phe44, Tyr73, Met107–His110, and Ser123. Tyr72 to Arg74 lines the thiamine diphosphate pocket. Thiamine diphosphate contacts are provided by residues Ser123–Val125, Gly153–Gln159, Asn183–Ile187, and His252. Glu154, Asn183, and Tyr185 together coordinate Mg(2+). The interval Leu249 to Lys272 is disordered. The span at Ser259–Lys272 shows a compositional bias: basic and acidic residues.

The protein belongs to the BCKDHA family. In terms of assembly, heterotetramer of two alpha and two beta chains. Directly associated with ODBB in the E1 complex. It depends on thiamine diphosphate as a cofactor.

It carries out the reaction N(6)-[(R)-lipoyl]-L-lysyl-[protein] + 3-methyl-2-oxobutanoate + H(+) = N(6)-[(R)-S(8)-2-methylpropanoyldihydrolipoyl]-L-lysyl-[protein] + CO2. Functionally, the branched-chain alpha-keto dehydrogenase complex catalyzes the overall conversion of alpha-keto acids to acyl-CoA and CO(2). It contains multiple copies of three enzymatic components: branched-chain alpha-keto acid decarboxylase (E1), lipoamide acyltransferase (E2) and lipoamide dehydrogenase (E3). In Bacillus subtilis (strain 168), this protein is 2-oxoisovalerate dehydrogenase subunit alpha (bfmBAA).